Here is a 348-residue protein sequence, read N- to C-terminus: D-erythrose-4-phosphate dehydrogenase (348 aa).

NAD(+)-binding positions include 12–13 (RI) and R81. Substrate-binding positions include 154 to 156 (SCT), R200, 213 to 214 (TK), and R236. The active-site Nucleophile is C155. N318 provides a ligand contact to NAD(+).

The protein belongs to the glyceraldehyde-3-phosphate dehydrogenase family. Epd subfamily. Homotetramer.

It is found in the cytoplasm. It carries out the reaction D-erythrose 4-phosphate + NAD(+) + H2O = 4-phospho-D-erythronate + NADH + 2 H(+). It functions in the pathway cofactor biosynthesis; pyridoxine 5'-phosphate biosynthesis; pyridoxine 5'-phosphate from D-erythrose 4-phosphate: step 1/5. In terms of biological role, catalyzes the NAD-dependent conversion of D-erythrose 4-phosphate to 4-phosphoerythronate. This Salmonella agona (strain SL483) protein is D-erythrose-4-phosphate dehydrogenase.